The sequence spans 432 residues: GTPase Obg (432 aa).

An Obg domain is found at 1–158 (MFVDQVKIYV…RNIILELKLL (158 aa)). In terms of domain architecture, OBG-type G spans 159–329 (ADVGLVGFPS…LLFAIADLLE (171 aa)). GTP is bound by residues 165 to 172 (GFPSVGKS), 190 to 194 (FTTLV), 212 to 215 (DLPG), 282 to 285 (NKMD), and 310 to 312 (SAA). The Mg(2+) site is built by Ser172 and Thr192. An OCT domain is found at 350–428 (KYEKEEPPFT…LLDYEFEFVD (79 aa)).

Belongs to the TRAFAC class OBG-HflX-like GTPase superfamily. OBG GTPase family. In terms of assembly, monomer. The cofactor is Mg(2+).

Its subcellular location is the cytoplasm. Functionally, an essential GTPase which binds GTP, GDP and possibly (p)ppGpp with moderate affinity, with high nucleotide exchange rates and a fairly low GTP hydrolysis rate. Plays a role in control of the cell cycle, stress response, ribosome biogenesis and in those bacteria that undergo differentiation, in morphogenesis control. The sequence is that of GTPase Obg from Geobacillus kaustophilus (strain HTA426).